The primary structure comprises 336 residues: Dihydroorotate dehydrogenase (quinone) (336 aa).

Residues 62 to 66 (AGLDK) and Thr86 contribute to the FMN site. Position 66 (Lys66) interacts with substrate. 111 to 115 (NRMGF) contacts substrate. The FMN site is built by Asn139 and Asn172. Residue Asn172 participates in substrate binding. Ser175 acts as the Nucleophile in catalysis. Asn177 contacts substrate. FMN-binding residues include Lys217 and Thr245. Position 246–247 (246–247 (NT)) interacts with substrate. Residues Gly268, Gly297, and 318 to 319 (YS) contribute to the FMN site.

Belongs to the dihydroorotate dehydrogenase family. Type 2 subfamily. Monomer. Requires FMN as cofactor.

Its subcellular location is the cell membrane. The enzyme catalyses (S)-dihydroorotate + a quinone = orotate + a quinol. The protein operates within pyrimidine metabolism; UMP biosynthesis via de novo pathway; orotate from (S)-dihydroorotate (quinone route): step 1/1. Its function is as follows. Catalyzes the conversion of dihydroorotate to orotate with quinone as electron acceptor. This chain is Dihydroorotate dehydrogenase (quinone), found in Aeromonas hydrophila subsp. hydrophila (strain ATCC 7966 / DSM 30187 / BCRC 13018 / CCUG 14551 / JCM 1027 / KCTC 2358 / NCIMB 9240 / NCTC 8049).